A 448-amino-acid chain; its full sequence is Probable glycine dehydrogenase (decarboxylating) subunit 1 (448 aa).

This sequence belongs to the GcvP family. N-terminal subunit subfamily. As to quaternary structure, the glycine cleavage system is composed of four proteins: P, T, L and H. In this organism, the P 'protein' is a heterodimer of two subunits.

It catalyses the reaction N(6)-[(R)-lipoyl]-L-lysyl-[glycine-cleavage complex H protein] + glycine + H(+) = N(6)-[(R)-S(8)-aminomethyldihydrolipoyl]-L-lysyl-[glycine-cleavage complex H protein] + CO2. Functionally, the glycine cleavage system catalyzes the degradation of glycine. The P protein binds the alpha-amino group of glycine through its pyridoxal phosphate cofactor; CO(2) is released and the remaining methylamine moiety is then transferred to the lipoamide cofactor of the H protein. This chain is Probable glycine dehydrogenase (decarboxylating) subunit 1, found in Bacillus licheniformis (strain ATCC 14580 / DSM 13 / JCM 2505 / CCUG 7422 / NBRC 12200 / NCIMB 9375 / NCTC 10341 / NRRL NRS-1264 / Gibson 46).